The chain runs to 227 residues: Cytidylate kinase (227 aa).

ATP is bound at residue 12–20 (GPSGAGKGT).

The protein belongs to the cytidylate kinase family. Type 1 subfamily.

Its subcellular location is the cytoplasm. The catalysed reaction is CMP + ATP = CDP + ADP. It catalyses the reaction dCMP + ATP = dCDP + ADP. This Enterobacter sp. (strain 638) protein is Cytidylate kinase.